We begin with the raw amino-acid sequence, 338 residues long: Lipoate-protein ligase A (338 aa).

In terms of domain architecture, BPL/LPL catalytic spans 29-216; sequence PATQRVLFLW…AFFAHYGERV (188 aa). Residues arginine 71, 76–79, and lysine 134 contribute to the ATP site; that span reads GAVF. Lysine 134 lines the (R)-lipoate pocket.

Belongs to the LplA family. In terms of assembly, monomer.

The protein resides in the cytoplasm. The enzyme catalyses L-lysyl-[lipoyl-carrier protein] + (R)-lipoate + ATP = N(6)-[(R)-lipoyl]-L-lysyl-[lipoyl-carrier protein] + AMP + diphosphate + H(+). Its pathway is protein modification; protein lipoylation via exogenous pathway; protein N(6)-(lipoyl)lysine from lipoate: step 1/2. It functions in the pathway protein modification; protein lipoylation via exogenous pathway; protein N(6)-(lipoyl)lysine from lipoate: step 2/2. In terms of biological role, catalyzes both the ATP-dependent activation of exogenously supplied lipoate to lipoyl-AMP and the transfer of the activated lipoyl onto the lipoyl domains of lipoate-dependent enzymes. The polypeptide is Lipoate-protein ligase A (Escherichia coli O81 (strain ED1a)).